The following is a 164-amino-acid chain: UPF0304 protein YfbU (164 aa).

Belongs to the UPF0304 family.

The protein is UPF0304 protein YfbU of Shigella flexneri.